Reading from the N-terminus, the 388-residue chain is MRARRGLLRLPRRSLLAALFFFSLSSSLLYFVYVAPGIVNTYLFMVQAQGILLRDNVRTIGAQVYEQVVRSAYAKRNSSLNDSDYPLDLNHSEAFPPTTTFLPEDFTYFANHPCPERLPSMKGPIDINMSEIAMDDIHELFSRDPAIKLGGHWKPADCVPRWKVAILIPFRNRHEHLPVLLRHLLPMLQRQRLQFAFYVIEQVGTQPFNRAMLFNVGFQEAMKDLDWDCLIFHDVDHIPESDRNYYGCGQMPRHFATKLDKYMYLLPYTEFFGGVSGLTVEQFRKINGFPNAFWGWGGEDDDLWNRVQNAGYSVSRPEGDTGKYKSIPHHHRGEVQFLGRYALLRKSKERQGLDGLNNLNYSANVTYDALYKNITVNLTPELAQVTEY.

The Cytoplasmic portion of the chain corresponds to Met-1–Ser-14. Residues Leu-15–Ala-35 traverse the membrane as a helical; Signal-anchor for type II membrane protein segment. Residues Pro-36–Tyr-388 are Lumenal-facing. N-linked (GlcNAc...) asparagine glycosylation is found at Asn-77, Asn-81, Asn-90, and Asn-128. A disulfide bond links Cys-114 and Cys-158. UDP-alpha-D-galactose contacts are provided by residues Pro-169–Arg-173, Phe-208–Arg-210, Val-235–Asp-236, Tyr-264, and Trp-296. Residues Cys-229 and Cys-248 are joined by a disulfide bond. Asp-236 lines the Mn(2+) pocket. Residue Gly-298–Asp-301 coordinates N-acetyl-D-glucosamine. Mn(2+) is bound at residue His-329. Residue His-329–His-330 participates in UDP-alpha-D-galactose binding. Arg-340 is a binding site for N-acetyl-D-glucosamine. N-linked (GlcNAc...) asparagine glycosylation is found at Asn-360, Asn-364, and Asn-373.

Belongs to the glycosyltransferase 7 family. Mn(2+) is required as a cofactor. As to expression, highest levels in heart, brain, liver and kidney with lower levels in spleen, lung and testis.

Its subcellular location is the golgi apparatus. It localises to the golgi stack membrane. The catalysed reaction is a beta-D-glucosyl-(1&lt;-&gt;1')-N-acylsphing-4-enine + UDP-alpha-D-galactose = a beta-D-Gal-(1-&gt;4)-beta-D-Glc-(1&lt;-&gt;1)-Cer(d18:1(4E)) + UDP + H(+). It participates in protein modification; protein glycosylation. It functions in the pathway sphingolipid metabolism. Catalyzes the synthesis of lactosylceramide (LacCer) via the transfer of galactose from UDP-galactose to glucosylceramide (GlcCer). LacCer is the starting point in the biosynthesis of all gangliosides (membrane-bound glycosphingolipids) which play pivotal roles in the CNS including neuronal maturation and axonal and myelin formation. Plays a role in the glycosylation of BMPR1A and regulation of its protein stability. Essential for extraembryonic development during early embryogenesis. The protein is Beta-1,4-galactosyltransferase 5 of Mus musculus (Mouse).